A 205-amino-acid polypeptide reads, in one-letter code: Ribosome maturation factor RimP (205 aa).

Belongs to the RimP family.

It is found in the cytoplasm. In terms of biological role, required for maturation of 30S ribosomal subunits. In Sinorhizobium medicae (strain WSM419) (Ensifer medicae), this protein is Ribosome maturation factor RimP.